The sequence spans 186 residues: MKTCNLTDRMKVKMIMLLFQILAISTLQSVSAYIPDRYIQENVAVRGKATQSDQLQGQWDAFSHASNAIDGNQDSYFYHGSCTHTSGGANPWWRVDLLQEYKITSVTITNRGDCCGERITGARIIIGKNNGLNNPECSTVGIMTAGETKTFRCSHPMIGRYVTVYLPKTEYLHLCEVEVNAMLPAN.

The signal sequence occupies residues 1–32; that stretch reads MKTCNLTDRMKVKMIMLLFQILAISTLQSVSA. An F5/8 type C-like region spans residues 40-186; it reads QENVAVRGKA…VEVNAMLPAN (147 aa). 4 residues coordinate Ca(2+): asparagine 67, aspartate 70, asparagine 72, and serine 81. Cystine bridges form between cysteine 82–cysteine 175, cysteine 114–cysteine 115, and cysteine 137–cysteine 153. Alpha-L-fucose contacts are provided by histidine 84 and arginine 111. Residues 111–113 carry the Cell attachment site motif; sequence RGD. Residue arginine 118 participates in alpha-L-fucose binding. Ca(2+)-binding residues include cysteine 175 and glutamate 176.

Belongs to the fucolectin family. As to quaternary structure, homotrimer. Gill mucous cells.

Its subcellular location is the secreted. In terms of biological role, acts as a defensive agent. Recognizes blood group fucosylated oligosaccharides including A, B, H and Lewis B-type antigens. Does not recognize Lewis A antigen and has low affinity for monovalent haptens. This Anguilla japonica (Japanese eel) protein is Fucolectin-6.